The chain runs to 277 residues: Putative phosphoenolpyruvate synthase regulatory protein (277 aa).

ADP is bound at residue 157 to 164 (GVSRCGKT).

This sequence belongs to the pyruvate, phosphate/water dikinase regulatory protein family. PSRP subfamily.

The catalysed reaction is [pyruvate, water dikinase] + ADP = [pyruvate, water dikinase]-phosphate + AMP + H(+). It carries out the reaction [pyruvate, water dikinase]-phosphate + phosphate + H(+) = [pyruvate, water dikinase] + diphosphate. Functionally, bifunctional serine/threonine kinase and phosphorylase involved in the regulation of the phosphoenolpyruvate synthase (PEPS) by catalyzing its phosphorylation/dephosphorylation. This Photobacterium profundum (strain SS9) protein is Putative phosphoenolpyruvate synthase regulatory protein.